Consider the following 301-residue polypeptide: Negative regulator of the PHO system (301 aa).

The Protein kinase domain occupies 7–297 (FKQLERLGNG…AQQALSHPLF (291 aa)). Residues 13–21 (LGNGTYATV) and Lys36 each bind ATP. The active-site Proton acceptor is Asp133.

This sequence belongs to the protein kinase superfamily. CMGC Ser/Thr protein kinase family. CDC2/CDKX subfamily. Interacts with a number of cyclins.

It catalyses the reaction L-seryl-[protein] + ATP = O-phospho-L-seryl-[protein] + ADP + H(+). It carries out the reaction L-threonyl-[protein] + ATP = O-phospho-L-threonyl-[protein] + ADP + H(+). Functionally, when phosphate concentrations are high it phosphorylates the PHO4 transcription factor thus establishing repression. The chain is Negative regulator of the PHO system (PHO85) from Eremothecium gossypii (strain ATCC 10895 / CBS 109.51 / FGSC 9923 / NRRL Y-1056) (Yeast).